We begin with the raw amino-acid sequence, 252 residues long: MIETKPIPGLALPRHDHALVLFSGGQDSTTCLAWALERFAHVETIGFTYGQRHSVEMECRGRVRQVLAHMSGRSGADWGSRLGDDHVLDLGNALHHVGQSALTGRSPIEIGQGGLPTSFVPGRNLIFLTYAAALGWRRGLRRMVGGMCETDYSGYPDCRDDTIKAMQLALNTGMEAHFVLETPLMWLTKAETWALADSLGGPALVALIEEETHTCYLGDRSQRHPWGYGCGECPACSLRAEGWREWQTASSA.

22–32 provides a ligand contact to ATP; that stretch reads FSGGQDSTTCL. Cysteine 215, cysteine 230, cysteine 233, and cysteine 236 together coordinate Zn(2+).

The protein belongs to the QueC family. Zn(2+) serves as cofactor.

The enzyme catalyses 7-carboxy-7-deazaguanine + NH4(+) + ATP = 7-cyano-7-deazaguanine + ADP + phosphate + H2O + H(+). It functions in the pathway purine metabolism; 7-cyano-7-deazaguanine biosynthesis. Catalyzes the ATP-dependent conversion of 7-carboxy-7-deazaguanine (CDG) to 7-cyano-7-deazaguanine (preQ(0)). In Granulibacter bethesdensis (strain ATCC BAA-1260 / CGDNIH1), this protein is 7-cyano-7-deazaguanine synthase.